A 345-amino-acid polypeptide reads, in one-letter code: Methylthioribose-1-phosphate isomerase (345 aa).

Substrate-binding positions include 44–46 (RGA), Arg-86, and Gln-194. Asp-235 acts as the Proton donor in catalysis. 245-246 (NK) is a substrate binding site.

The protein belongs to the eIF-2B alpha/beta/delta subunits family. MtnA subfamily.

The enzyme catalyses 5-(methylsulfanyl)-alpha-D-ribose 1-phosphate = 5-(methylsulfanyl)-D-ribulose 1-phosphate. It functions in the pathway amino-acid biosynthesis; L-methionine biosynthesis via salvage pathway; L-methionine from S-methyl-5-thio-alpha-D-ribose 1-phosphate: step 1/6. In terms of biological role, catalyzes the interconversion of methylthioribose-1-phosphate (MTR-1-P) into methylthioribulose-1-phosphate (MTRu-1-P). The chain is Methylthioribose-1-phosphate isomerase from Desulfitobacterium hafniense (strain DSM 10664 / DCB-2).